The chain runs to 165 residues: Phosphopantetheine adenylyltransferase (165 aa).

Threonine 11 contributes to the substrate binding site. ATP is bound by residues 11 to 12 and histidine 19; that span reads TF. Lysine 43, valine 75, and arginine 89 together coordinate substrate. ATP-binding positions include 90-92, glutamate 100, and 125-131; these read GLR and YQFISST.

This sequence belongs to the bacterial CoaD family. Homohexamer. Mg(2+) is required as a cofactor.

It is found in the cytoplasm. The enzyme catalyses (R)-4'-phosphopantetheine + ATP + H(+) = 3'-dephospho-CoA + diphosphate. It participates in cofactor biosynthesis; coenzyme A biosynthesis; CoA from (R)-pantothenate: step 4/5. In terms of biological role, reversibly transfers an adenylyl group from ATP to 4'-phosphopantetheine, yielding dephospho-CoA (dPCoA) and pyrophosphate. This Acidovorax ebreus (strain TPSY) (Diaphorobacter sp. (strain TPSY)) protein is Phosphopantetheine adenylyltransferase.